Reading from the N-terminus, the 79-residue chain is Translation initiation factor IF-1, chloroplastic (79 aa).

Residues 1-74 (MTRKNIDLIE…HRGRITFRLR (74 aa)) enclose the S1-like domain.

The protein belongs to the IF-1 family. As to quaternary structure, component of the 30S ribosomal translation pre-initiation complex which assembles on the 30S ribosome in the order IF-2 and IF-3, IF-1 and N-formylmethionyl-tRNA(fMet); mRNA recruitment can occur at any time during PIC assembly.

Its subcellular location is the plastid. The protein localises to the chloroplast. One of the essential components for the initiation of protein synthesis. Stabilizes the binding of IF-2 and IF-3 on the 30S subunit to which N-formylmethionyl-tRNA(fMet) subsequently binds. Helps modulate mRNA selection, yielding the 30S pre-initiation complex (PIC). Upon addition of the 50S ribosomal subunit IF-1, IF-2 and IF-3 are released leaving the mature 70S translation initiation complex. The chain is Translation initiation factor IF-1, chloroplastic from Chlorella vulgaris (Green alga).